Consider the following 491-residue polypeptide: Glutamyl-tRNA(Gln) amidotransferase subunit A (491 aa).

Active-site charge relay system residues include Lys-79 and Ser-154. Residue Ser-178 is the Acyl-ester intermediate of the active site.

This sequence belongs to the amidase family. GatA subfamily. As to quaternary structure, heterotrimer of A, B and C subunits.

The catalysed reaction is L-glutamyl-tRNA(Gln) + L-glutamine + ATP + H2O = L-glutaminyl-tRNA(Gln) + L-glutamate + ADP + phosphate + H(+). Its function is as follows. Allows the formation of correctly charged Gln-tRNA(Gln) through the transamidation of misacylated Glu-tRNA(Gln) in organisms which lack glutaminyl-tRNA synthetase. The reaction takes place in the presence of glutamine and ATP through an activated gamma-phospho-Glu-tRNA(Gln). The polypeptide is Glutamyl-tRNA(Gln) amidotransferase subunit A (Natranaerobius thermophilus (strain ATCC BAA-1301 / DSM 18059 / JW/NM-WN-LF)).